We begin with the raw amino-acid sequence, 131 residues long: Small ribosomal subunit protein uS9 (131 aa).

Belongs to the universal ribosomal protein uS9 family.

This is Small ribosomal subunit protein uS9 from Mesoplasma florum (strain ATCC 33453 / NBRC 100688 / NCTC 11704 / L1) (Acholeplasma florum).